Consider the following 499-residue polypeptide: Aspartyl/glutamyl-tRNA(Asn/Gln) amidotransferase subunit B (499 aa).

Belongs to the GatB/GatE family. GatB subfamily. In terms of assembly, heterotrimer of A, B and C subunits.

It carries out the reaction L-glutamyl-tRNA(Gln) + L-glutamine + ATP + H2O = L-glutaminyl-tRNA(Gln) + L-glutamate + ADP + phosphate + H(+). The catalysed reaction is L-aspartyl-tRNA(Asn) + L-glutamine + ATP + H2O = L-asparaginyl-tRNA(Asn) + L-glutamate + ADP + phosphate + 2 H(+). Functionally, allows the formation of correctly charged Asn-tRNA(Asn) or Gln-tRNA(Gln) through the transamidation of misacylated Asp-tRNA(Asn) or Glu-tRNA(Gln) in organisms which lack either or both of asparaginyl-tRNA or glutaminyl-tRNA synthetases. The reaction takes place in the presence of glutamine and ATP through an activated phospho-Asp-tRNA(Asn) or phospho-Glu-tRNA(Gln). This chain is Aspartyl/glutamyl-tRNA(Asn/Gln) amidotransferase subunit B, found in Salinispora arenicola (strain CNS-205).